Reading from the N-terminus, the 284-residue chain is 4-diphosphocytidyl-2-C-methyl-D-erythritol kinase (284 aa).

The active site involves Lys-14. 98-108 (PMGGGLGGGSS) serves as a coordination point for ATP. Asp-140 is a catalytic residue.

It belongs to the GHMP kinase family. IspE subfamily.

It catalyses the reaction 4-CDP-2-C-methyl-D-erythritol + ATP = 4-CDP-2-C-methyl-D-erythritol 2-phosphate + ADP + H(+). It functions in the pathway isoprenoid biosynthesis; isopentenyl diphosphate biosynthesis via DXP pathway; isopentenyl diphosphate from 1-deoxy-D-xylulose 5-phosphate: step 3/6. In terms of biological role, catalyzes the phosphorylation of the position 2 hydroxy group of 4-diphosphocytidyl-2C-methyl-D-erythritol. The sequence is that of 4-diphosphocytidyl-2-C-methyl-D-erythritol kinase from Shewanella baltica (strain OS185).